A 403-amino-acid chain; its full sequence is Phosphoglycerate kinase (403 aa).

Substrate-binding positions include 21 to 23 (DFN), Arg36, 59 to 62 (HLGR), Arg119, and Arg159. ATP is bound by residues Lys214, Gly301, Glu332, and 359 to 362 (GGDS).

This sequence belongs to the phosphoglycerate kinase family. As to quaternary structure, monomer.

The protein localises to the cytoplasm. The enzyme catalyses (2R)-3-phosphoglycerate + ATP = (2R)-3-phospho-glyceroyl phosphate + ADP. It functions in the pathway carbohydrate degradation; glycolysis; pyruvate from D-glyceraldehyde 3-phosphate: step 2/5. The chain is Phosphoglycerate kinase from Lactobacillus helveticus (strain DPC 4571).